The following is a 138-amino-acid chain: Flagellar assembly factor FliW (138 aa).

This sequence belongs to the FliW family. In terms of assembly, interacts with translational regulator CsrA and flagellin(s).

Its subcellular location is the cytoplasm. Functionally, acts as an anti-CsrA protein, binds CsrA and prevents it from repressing translation of its target genes, one of which is flagellin. Binds to flagellin and participates in the assembly of the flagellum. This chain is Flagellar assembly factor FliW, found in Symbiobacterium thermophilum (strain DSM 24528 / JCM 14929 / IAM 14863 / T).